A 785-amino-acid chain; its full sequence is Ubiquitin carboxyl-terminal hydrolase 10 (785 aa).

2 stretches are compositionally biased toward polar residues: residues 113–122 (LTLDSGSNAE) and 262–277 (DTTE…TLES). Disordered regions lie at residues 113-145 (LTLD…PPGY) and 262-314 (DTTE…ATAT). Residues 290 to 304 (HTVESTDSDQAKPEE) show a composition bias toward basic and acidic residues. A compositionally biased stretch (low complexity) spans 305–314 (ASPTTEATAT). Residues 401-782 (RGLINKGNWC…TAYLLYYRRV (382 aa)) enclose the USP domain. C410 (nucleophile) is an active-site residue. The segment at 537 to 581 (EKLSVSNGPEVQTVREEEEQDEQGEGSEDEWEQVGPRNKSSVTRQ) is disordered. The segment covering 552–568 (EEEEQDEQGEGSEDEWE) has biased composition (acidic residues). Catalysis depends on H736, which acts as the Proton acceptor.

It belongs to the peptidase C19 family. USP10 subfamily.

The protein resides in the cytoplasm. The protein localises to the nucleus. The catalysed reaction is Thiol-dependent hydrolysis of ester, thioester, amide, peptide and isopeptide bonds formed by the C-terminal Gly of ubiquitin (a 76-residue protein attached to proteins as an intracellular targeting signal).. Functionally, hydrolase that can remove conjugated ubiquitin from target proteins such as p53/TP53, RPS2/us5, RPS3/us3, RPS10/eS10, BECN1, SNX3 and CFTR. Acts as an essential regulator of p53/TP53 stability: in unstressed cells, specifically deubiquitinates p53/TP53 in the cytoplasm, leading to counteracts MDM2 action and stabilize p53/TP53. Following DNA damage, translocates to the nucleus and deubiquitinates p53/TP53, leading to regulate the p53/TP53-dependent DNA damage response. Component of a regulatory loop that controls autophagy and p53/TP53 levels. Plays a key role in 40S ribosome subunit recycling when a ribosome has stalled during translation: acts both by inhibiting formation of stress granules, which store stalled translation pre-initiation complexes, and mediating deubiquitination of 40S ribosome subunits. Deubiquitinates CFTR in early endosomes, enhancing its endocytic recycling. The protein is Ubiquitin carboxyl-terminal hydrolase 10 (USP10) of Gallus gallus (Chicken).